The sequence spans 370 residues: NADH-quinone oxidoreductase subunit D 2 (370 aa).

Belongs to the complex I 49 kDa subunit family. As to quaternary structure, NDH-1 is composed of 14 different subunits. Subunits NuoB, C, D, E, F, and G constitute the peripheral sector of the complex.

It localises to the cell membrane. The catalysed reaction is a quinone + NADH + 5 H(+)(in) = a quinol + NAD(+) + 4 H(+)(out). NDH-1 shuttles electrons from NADH, via FMN and iron-sulfur (Fe-S) centers, to quinones in the respiratory chain. The immediate electron acceptor for the enzyme in this species is believed to be ubiquinone. Couples the redox reaction to proton translocation (for every two electrons transferred, four hydrogen ions are translocated across the cytoplasmic membrane), and thus conserves the redox energy in a proton gradient. The chain is NADH-quinone oxidoreductase subunit D 2 from Herpetosiphon aurantiacus (strain ATCC 23779 / DSM 785 / 114-95).